A 316-amino-acid polypeptide reads, in one-letter code: tRNA pseudouridine synthase B (316 aa).

Aspartate 47 (nucleophile) is an active-site residue.

It belongs to the pseudouridine synthase TruB family. Type 1 subfamily.

The catalysed reaction is uridine(55) in tRNA = pseudouridine(55) in tRNA. Functionally, responsible for synthesis of pseudouridine from uracil-55 in the psi GC loop of transfer RNAs. In Photobacterium profundum (strain SS9), this protein is tRNA pseudouridine synthase B.